A 397-amino-acid polypeptide reads, in one-letter code: Galactokinase (397 aa).

Residues 1 to 27 are disordered; the sequence is MGEAVGEPSASGSGSCTGRSRRGCGRR. Positions 9–18 are enriched in low complexity; it reads SASGSGSCTG. 36 to 39 contributes to the substrate binding site; it reads EHTD. ATP contacts are provided by residues Ser-69 and 124–130; that span reads GAGLSSS. Residues Ser-130 and Glu-161 each coordinate Mg(2+). Catalysis depends on Asp-173, which acts as the Proton acceptor. Tyr-225 is a substrate binding site.

This sequence belongs to the GHMP kinase family. GalK subfamily.

The protein resides in the cytoplasm. It carries out the reaction alpha-D-galactose + ATP = alpha-D-galactose 1-phosphate + ADP + H(+). Its pathway is carbohydrate metabolism; galactose metabolism. In terms of biological role, catalyzes the transfer of the gamma-phosphate of ATP to D-galactose to form alpha-D-galactose-1-phosphate (Gal-1-P). The sequence is that of Galactokinase from Streptomyces lividans.